Reading from the N-terminus, the 404-residue chain is uncharacterized protein (404 aa).

The next 12 helical transmembrane spans lie at 3-23 (IIAK…PITE), 43-63 (TTQI…LTLG), 73-93 (PVVL…IFAP), 95-115 (IETL…GSVI), 135-155 (SLSP…GYII), 162-182 (YTFV…CKIL), 216-236 (IIGA…FIFI), 248-268 (KLAF…GYLI), 280-300 (ILGL…ALIL), 309-329 (IAVI…NLLI), 346-366 (TAGS…TFLV), and 377-397 (FALL…YILI).

This sequence belongs to the major facilitator superfamily. Bcr/CmlA family.

It is found in the cell inner membrane. This is an uncharacterized protein from Rickettsia bellii (strain RML369-C).